The primary structure comprises 502 residues: Nostrin (502 aa).

Residues 1–260 (MRDPLTDCSY…AISKVDVEKD (260 aa)) form the F-BAR domain. S114 carries the phosphoserine modification. Coiled coils occupy residues 160-230 (SMTQ…LNQY) and 305-335 (KLWR…SSAS). Residues 292–372 (PMDKERRKSL…SYKLSTVLAD (81 aa)) form the REM-1 domain. Residues 413–437 (KAESKAPAGEQNNPSSSRPGSSVSQ) are disordered. Over residues 423-437 (QNNPSSSRPGSSVSQ) the composition is skewed to low complexity. In terms of domain architecture, SH3 spans 438 to 497 (GNNQLCKALYTFQARQDDELNLEKGDIVTIHEKKEEGWWFGSLNGKKGHFPAAYVEELPP). Phosphoserine is present on S479.

As to quaternary structure, homotrimer. Interacts with DAB2. Interacts with NOS3, WASL and CAV1. Interacts (via SH3 domain) with DNM2; this interaction allows the recruitment of NOS3 to dynamin-positive structures. As to expression, over-expressed in brain microcapillaries from spontaneously hypertensive rats.

It localises to the cell membrane. It is found in the cytoplasmic vesicle. The protein resides in the cytoplasm. The protein localises to the cytoskeleton. Its subcellular location is the nucleus. Its function is as follows. Multivalent adapter protein which may decrease NOS3 activity by inducing its translocation away from the plasma membrane. In Rattus norvegicus (Rat), this protein is Nostrin.